We begin with the raw amino-acid sequence, 413 residues long: Replication factor C large subunit (413 aa).

Gly-54–Thr-61 contacts ATP.

Belongs to the activator 1 small subunits family. RfcL subfamily. As to quaternary structure, heteromultimer composed of small subunits (RfcS) and large subunits (RfcL).

Part of the RFC clamp loader complex which loads the PCNA sliding clamp onto DNA. The chain is Replication factor C large subunit from Thermofilum pendens (strain DSM 2475 / Hrk 5).